A 54-amino-acid chain; its full sequence is uncharacterized protein (54 aa).

This is an uncharacterized protein from Rhizobium etli.